The following is a 343-amino-acid chain: ATP-dependent (S)-NAD(P)H-hydrate dehydratase (343 aa).

Residues 1–42 (MAVCPYGAAAVVMALLSAAIAFHCSPLLAVLQRALSLHTAHA) constitute a mitochondrion transit peptide. One can recognise a YjeF C-terminal domain in the interval 49-340 (LFQLVRNIVP…AEVGAAFSKL (292 aa)). Lys63 carries the post-translational modification N6-acetyllysine. The residue at position 81 (Tyr81) is a Phosphotyrosine. (6S)-NADPHX-binding positions include Gly149 and 202–208 (NHVEFSR). ATP is bound by residues 242-246 (KGEQD) and 261-270 (GSSRRCGGQG). Asp271 provides a ligand contact to (6S)-NADPHX.

Belongs to the NnrD/CARKD family. Mg(2+) is required as a cofactor.

Its subcellular location is the mitochondrion. It catalyses the reaction (6S)-NADHX + ATP = ADP + phosphate + NADH + H(+). The enzyme catalyses (6S)-NADPHX + ATP = ADP + phosphate + NADPH + H(+). In terms of biological role, catalyzes the dehydration of the S-form of NAD(P)HX at the expense of ATP, which is converted to ADP. Together with NAD(P)HX epimerase, which catalyzes the epimerization of the S- and R-forms, the enzyme allows the repair of both epimers of NAD(P)HX, a damaged form of NAD(P)H that is a result of enzymatic or heat-dependent hydration. The polypeptide is ATP-dependent (S)-NAD(P)H-hydrate dehydratase (Rattus norvegicus (Rat)).